We begin with the raw amino-acid sequence, 165 residues long: Peptide methionine sulfoxide reductase MsrA (165 aa).

Cys10 is a catalytic residue.

The protein belongs to the MsrA Met sulfoxide reductase family.

The catalysed reaction is L-methionyl-[protein] + [thioredoxin]-disulfide + H2O = L-methionyl-(S)-S-oxide-[protein] + [thioredoxin]-dithiol. It carries out the reaction [thioredoxin]-disulfide + L-methionine + H2O = L-methionine (S)-S-oxide + [thioredoxin]-dithiol. In terms of biological role, has an important function as a repair enzyme for proteins that have been inactivated by oxidation. Catalyzes the reversible oxidation-reduction of methionine sulfoxide in proteins to methionine. The polypeptide is Peptide methionine sulfoxide reductase MsrA (Campylobacter jejuni (strain RM1221)).